The following is a 490-amino-acid chain: AP-5 complex subunit mu-1 (490 aa).

An MHD domain is found at 206-476 (KPQVSISITE…LISSDYYIWN (271 aa)).

Belongs to the adaptor complexes medium subunit family. In terms of assembly, probably part of the adaptor protein complex 5 (AP-5) a tetramer composed of AP5B1, AP5M1, AP5S1 and AP5Z1. In terms of tissue distribution, expressed in various tumor cell lines including Jurkat, Hep-G2 and HeLa.

Its subcellular location is the cytoplasm. It localises to the cytosol. It is found in the late endosome membrane. The protein localises to the lysosome membrane. Functionally, as part of AP-5, a probable fifth adaptor protein complex it may be involved in endosomal transport. According to PubMed:18395520, it may play a role in cell death. This Homo sapiens (Human) protein is AP-5 complex subunit mu-1 (AP5M1).